Consider the following 537-residue polypeptide: Carboxypeptidase Y homolog A (537 aa).

The signal sequence occupies residues 1–17; the sequence is MRLSTSALVLGAASSAV. A propeptide spanning residues 18 to 124 is cleaved from the precursor; that stretch reads AFDQKVLGDL…RLDNYNLRAK (107 aa). Cystine bridges form between Cys-178–Cys-418, Cys-312–Cys-326, Cys-336–Cys-359, Cys-343–Cys-352, and Cys-381–Cys-388. Asn-209 carries N-linked (GlcNAc...) asparagine glycosylation. Ser-265 is an active-site residue. Asp-457 is an active-site residue. Residue Asn-503 is glycosylated (N-linked (GlcNAc...) asparagine). Residue His-514 is part of the active site.

The protein belongs to the peptidase S10 family.

It is found in the vacuole. It carries out the reaction Release of a C-terminal amino acid with broad specificity.. Functionally, vacuolar carboxypeptidase involved in degradation of small peptides. Digests preferentially peptides containing an aliphatic or hydrophobic residue in P1' position, as well as methionine, leucine or phenylalanine in P1 position of ester substrate. This Fusarium vanettenii (strain ATCC MYA-4622 / CBS 123669 / FGSC 9596 / NRRL 45880 / 77-13-4) (Fusarium solani subsp. pisi) protein is Carboxypeptidase Y homolog A (CPYA).